The chain runs to 231 residues: eRF1 methyltransferase catalytic subunit mtq2 (231 aa).

S-adenosyl-L-methionine contacts are provided by residues 54–58 (GCGSG), Asp-80, and Asn-130. Residue 130-133 (NPPY) coordinates substrate.

This sequence belongs to the eukaryotic/archaeal PrmC-related family. Heterodimer of mtq2-trm112. mtq2 is the catalytic subunit carrying the catalytic and the S-adenosyl L-methionine binding sites.

It localises to the cytoplasm. It is found in the nucleus. It carries out the reaction L-glutaminyl-[peptide chain release factor] + S-adenosyl-L-methionine = N(5)-methyl-L-glutaminyl-[peptide chain release factor] + S-adenosyl-L-homocysteine + H(+). In terms of biological role, methylates eRF1 on 'Gln-182' using S-adenosyl L-methionine as methyl donor. eRF1 needs to be complexed to eRF3 in its GTP-bound form to be efficiently methylated. The chain is eRF1 methyltransferase catalytic subunit mtq2 (mtq2) from Schizosaccharomyces pombe (strain 972 / ATCC 24843) (Fission yeast).